Reading from the N-terminus, the 330-residue chain is Aspartate--ammonia ligase (330 aa).

Belongs to the class-II aminoacyl-tRNA synthetase family. AsnA subfamily.

It is found in the cytoplasm. It catalyses the reaction L-aspartate + NH4(+) + ATP = L-asparagine + AMP + diphosphate + H(+). Its pathway is amino-acid biosynthesis; L-asparagine biosynthesis; L-asparagine from L-aspartate (ammonia route): step 1/1. In Pectobacterium carotovorum subsp. carotovorum (strain PC1), this protein is Aspartate--ammonia ligase.